Consider the following 454-residue polypeptide: tRNA modification GTPase MnmE (454 aa).

Residues R23, E80, and K120 each coordinate (6S)-5-formyl-5,6,7,8-tetrahydrofolate. One can recognise a TrmE-type G domain in the interval 216-377; the sequence is GMKVVIAGRP…LRNHLKQSMG (162 aa). N226 contributes to the K(+) binding site. GTP contacts are provided by residues 226–231, 245–251, 270–273, 335–338, and 358–360; these read NAGKSS, TDIAGTT, DTAG, NKAD, and SAR. Position 230 (S230) interacts with Mg(2+). K(+)-binding residues include T245, I247, and T250. T251 is a Mg(2+) binding site. K454 lines the (6S)-5-formyl-5,6,7,8-tetrahydrofolate pocket.

Belongs to the TRAFAC class TrmE-Era-EngA-EngB-Septin-like GTPase superfamily. TrmE GTPase family. Homodimer. Heterotetramer of two MnmE and two MnmG subunits. Requires K(+) as cofactor.

The protein resides in the cytoplasm. Exhibits a very high intrinsic GTPase hydrolysis rate. Involved in the addition of a carboxymethylaminomethyl (cmnm) group at the wobble position (U34) of certain tRNAs, forming tRNA-cmnm(5)s(2)U34. The sequence is that of tRNA modification GTPase MnmE from Escherichia coli O6:K15:H31 (strain 536 / UPEC).